The following is a 94-amino-acid chain: MARRCEVTGRGTVSGNNVSHSHIKTRRTWKVNLIKKRIFLEDENRWVTIRLSTRALRTLRKKGIKAAIKDNGGSLGVLAPKKYAGITKQALKKA.

Residues 1–21 (MARRCEVTGRGTVSGNNVSHS) are disordered. Residues 11–20 (GTVSGNNVSH) show a composition bias toward polar residues.

It belongs to the bacterial ribosomal protein bL28 family.

This Leptospira borgpetersenii serovar Hardjo-bovis (strain JB197) protein is Large ribosomal subunit protein bL28.